The following is a 247-amino-acid chain: Pyridoxine 5'-phosphate synthase (247 aa).

Asn-7 lines the 3-amino-2-oxopropyl phosphate pocket. 1-deoxy-D-xylulose 5-phosphate is bound at residue 9-10 (DH). Arg-18 is a binding site for 3-amino-2-oxopropyl phosphate. The Proton acceptor role is filled by His-43. 2 residues coordinate 1-deoxy-D-xylulose 5-phosphate: Arg-45 and His-50. The active-site Proton acceptor is the Glu-70. Thr-100 contributes to the 1-deoxy-D-xylulose 5-phosphate binding site. Catalysis depends on His-190, which acts as the Proton donor. Residues Gly-191 and 212 to 213 (GH) each bind 3-amino-2-oxopropyl phosphate.

It belongs to the PNP synthase family. In terms of assembly, homooctamer; tetramer of dimers.

It localises to the cytoplasm. It carries out the reaction 3-amino-2-oxopropyl phosphate + 1-deoxy-D-xylulose 5-phosphate = pyridoxine 5'-phosphate + phosphate + 2 H2O + H(+). The protein operates within cofactor biosynthesis; pyridoxine 5'-phosphate biosynthesis; pyridoxine 5'-phosphate from D-erythrose 4-phosphate: step 5/5. Catalyzes the complicated ring closure reaction between the two acyclic compounds 1-deoxy-D-xylulose-5-phosphate (DXP) and 3-amino-2-oxopropyl phosphate (1-amino-acetone-3-phosphate or AAP) to form pyridoxine 5'-phosphate (PNP) and inorganic phosphate. This chain is Pyridoxine 5'-phosphate synthase, found in Synechococcus sp. (strain WH7803).